The primary structure comprises 161 residues: Decarboxylase (161 aa).

An EthD domain is found at 29-131 (QGMSEEAYRK…VGDHENFADT (103 aa)).

The protein belongs to the tpcK family.

The enzyme catalyses atrochrysone carboxylate + H(+) = atrochrysone + CO2. Its pathway is secondary metabolite biosynthesis. Decarboxylase; part of the gene cluster that mediates the biosynthesis of monodictyphenone, a prenyl xanthone derivative. The pathway begins with the synthesis of atrochrysone thioester by the polyketide synthase (PKS) mdpG. The atrochrysone carboxyl ACP thioesterase mdpF then breaks the thioester bond and releases the atrochrysone carboxylic acid from mdpG. The atrochrysone carboxylic acid is then converted to atrochrysone which is further transformed into emodin anthrone by mdpH-1 and mdpH-2. Emodin is further modified to yield monodictyphenone via several steps involving mdpB, mdpC mdpJ, mdpK and mdpL. These enzymes with xptA, xptB and xptC are also proposed to be involved in the synthesis of shamixanthone from emodin. Especially, direct reduction of emodin by the short chain dehydrogenase mdpC followed by dehydration catalyzed by the scytalone dehydratase-like protein mdpB gives loss of oxygen and formation of chrysophanol intermediate in two simple steps. The protein is Decarboxylase of Emericella nidulans (strain FGSC A4 / ATCC 38163 / CBS 112.46 / NRRL 194 / M139) (Aspergillus nidulans).